Here is a 457-residue protein sequence, read N- to C-terminus: MDRSLRNVLVVSFGFLLLFTAYGGLQSLQSSLYSEEGLGVTALSTLYGGMLLSSMFLPPLLIERLGCKGTIILSMCGYVAFSVGNFFASWYTLIPTSILLGLGAAPLWSAQCTYLTITGNTHAEKAGKRGKDMVNQYFGIFFLIFQSSGVWGNLISSLVFGQTPSQETLPEEQLTSCGASDCLMATTTTNSTQRPSQQLVYTLLGIYTGSGVLAVLMIAAFLQPIRDVQRESEGEKKSVPFWSTLLSTFKLYRDKRLCLLILLPLYSGLQQGFLSSEYTRSYVTCTLGIQFVGYVMICFSATDALCSVLYGKVSQYTGRAVLYVLGAVTHVSCMIALLLWRPRADHLAVFFVFSGLWGVADAVWQTQNNALYGVLFEKSKEAAFANYRLWEALGFVIAFGYSMFLCVHVKLYILLGVLSLTMVAYGLVECVESKNPIRPHAPGQVNQAEDEEIQTKM.

5 consecutive transmembrane segments (helical) span residues 8–28, 42–62, 65–85, 86–106, and 140–160; these read VLVVSFGFLLLFTAYGGLQSL, ALSTLYGGMLLSSMFLPPLLI, LGCKGTIILSMCGYVAFSVGN, FFASWYTLIPTSILLGLGAAP, and IFFLIFQSSGVWGNLISSLVF. An N-linked (GlcNAc...) asparagine glycan is attached at N190. The next 6 membrane-spanning stretches (helical) occupy residues 202 to 222, 257 to 277, 291 to 311, 320 to 340, 344 to 364, and 395 to 415; these read TLLGIYTGSGVLAVLMIAAFL, LCLLILLPLYSGLQQGFLSSE, FVGYVMICFSATDALCSVLYG, AVLYVLGAVTHVSCMIALLLW, ADHLAVFFVFSGLWGVADAVW, and FVIAFGYSMFLCVHVKLYILL.

The protein belongs to the unc-93 family. As to expression, expressed in testis, small intestine, spleen, prostate and ovary.

Its subcellular location is the cell membrane. The sequence is that of Protein unc-93 homolog A (UNC93A) from Homo sapiens (Human).